Here is a 353-residue protein sequence, read N- to C-terminus: Guanine nucleotide-binding protein G(q) subunit alpha (353 aa).

S-palmitoyl cysteine attachment occurs at residues cysteine 3 and cysteine 4. The region spanning 32 to 353 is the G-alpha domain; sequence RELKLLLLGT…QLNLKEYNLV (322 aa). The interval 35 to 48 is G1 motif; it reads KLLLLGTGESGKST. Residues 40-47, 174-180, 199-203, 268-271, and alanine 325 each bind GTP; these read GTGESGKS, LRVRVPT, DVGGQ, and NKKD. Mg(2+) contacts are provided by serine 47 and threonine 180. Residues 172-180 form a G2 motif region; sequence DILRVRVPT. Positions 195-204 are G3 motif; that stretch reads FRMVDVGGQR. Positions 264–271 are G4 motif; sequence ILFLNKKD. Residues 323-328 form a G5 motif region; that stretch reads TCATDT.

This sequence belongs to the G-alpha family. G(q) subfamily. G proteins are composed of 3 units; alpha, beta and gamma. The alpha chain contains the guanine nucleotide binding site.

Guanine nucleotide-binding proteins (G proteins) are involved as modulators or transducers in various transmembrane signaling systems. The sequence is that of Guanine nucleotide-binding protein G(q) subunit alpha from Lymnaea stagnalis (Great pond snail).